The sequence spans 704 residues: Phosphate acetyltransferase (704 aa).

Residues 379–704 are phosphate acetyltransferase; that stretch reads AFRYQVVQRA…AIQADAQAPA (326 aa).

It in the N-terminal section; belongs to the CobB/CobQ family. This sequence in the C-terminal section; belongs to the phosphate acetyltransferase and butyryltransferase family. As to quaternary structure, homohexamer.

It is found in the cytoplasm. It carries out the reaction acetyl-CoA + phosphate = acetyl phosphate + CoA. Its pathway is metabolic intermediate biosynthesis; acetyl-CoA biosynthesis; acetyl-CoA from acetate: step 2/2. Its activity is regulated as follows. Activity is increased under anaerobic growth conditions. In terms of biological role, involved in acetate metabolism. In combination with LdhA and AckA, allows fermentation of pyruvate, enhancing long-term survival under anaerobic conditions. The chain is Phosphate acetyltransferase (pta) from Pseudomonas aeruginosa (strain ATCC 15692 / DSM 22644 / CIP 104116 / JCM 14847 / LMG 12228 / 1C / PRS 101 / PAO1).